The chain runs to 72 residues: Sec-independent protein translocase protein TatA (72 aa).

The helical transmembrane segment at 1–21 (MLGGISIWQLLIVLAILVLIF) threads the bilayer.

Belongs to the TatA/E family. In terms of assembly, the Tat system comprises two distinct complexes: a TatABC complex, containing multiple copies of TatA, TatB and TatC subunits, and a separate TatA complex, containing only TatA subunits. Substrates initially bind to the TatABC complex, which probably triggers association of the separate TatA complex to form the active translocon.

It is found in the cell inner membrane. Part of the twin-arginine translocation (Tat) system that transports large folded proteins containing a characteristic twin-arginine motif in their signal peptide across membranes. TatA could form the protein-conducting channel of the Tat system. The polypeptide is Sec-independent protein translocase protein TatA (Marinomonas sp. (strain MWYL1)).